A 217-amino-acid polypeptide reads, in one-letter code: UPF0502 protein KPK_3478 (217 aa).

This sequence belongs to the UPF0502 family.

The polypeptide is UPF0502 protein KPK_3478 (Klebsiella pneumoniae (strain 342)).